Consider the following 305-residue polypeptide: Ribosomal RNA small subunit methyltransferase H (305 aa).

S-adenosyl-L-methionine-binding positions include 37–39 (GGH), aspartate 57, phenylalanine 85, aspartate 101, and histidine 108.

The protein belongs to the methyltransferase superfamily. RsmH family.

The protein localises to the cytoplasm. It carries out the reaction cytidine(1402) in 16S rRNA + S-adenosyl-L-methionine = N(4)-methylcytidine(1402) in 16S rRNA + S-adenosyl-L-homocysteine + H(+). Specifically methylates the N4 position of cytidine in position 1402 (C1402) of 16S rRNA. The protein is Ribosomal RNA small subunit methyltransferase H of Parabacteroides distasonis (strain ATCC 8503 / DSM 20701 / CIP 104284 / JCM 5825 / NCTC 11152).